Consider the following 157-residue polypeptide: Large ribosomal subunit protein uL11 (157 aa).

Disordered stretches follow at residues 1–28 and 138–157; these read MAGT…GPTP and NNPR…DILK. The span at 139–157 shows a compositional bias: basic and acidic residues; that stretch reads NPREFKSRMEDGEYDDILK.

The protein belongs to the universal ribosomal protein uL11 family. Part of the ribosomal stalk of the 50S ribosomal subunit. Interacts with L10 and the large rRNA to form the base of the stalk. L10 forms an elongated spine to which L12 dimers bind in a sequential fashion forming a multimeric L10(L12)X complex.

Functionally, forms part of the ribosomal stalk which helps the ribosome interact with GTP-bound translation factors. This chain is Large ribosomal subunit protein uL11, found in Haloquadratum walsbyi (strain DSM 16790 / HBSQ001).